The sequence spans 88 residues: UPF0250 protein Shewmr4_0986 (88 aa).

Belongs to the UPF0250 family.

The protein is UPF0250 protein Shewmr4_0986 of Shewanella sp. (strain MR-4).